Consider the following 318-residue polypeptide: D-alanine--D-alanine ligase (318 aa).

The ATP-grasp domain occupies 117–315 (KQVWLSLGLS…FETLVWRVLE (199 aa)). Position 146–201 (146–201 (ARQIGLPIIVKPANEGSSVGVSRVFDQAQLEEAVTLAARYDGALLMEQLIEGDELT)) interacts with ATP. Positions 268, 282, and 284 each coordinate Mg(2+).

Belongs to the D-alanine--D-alanine ligase family. The cofactor is Mg(2+). Mn(2+) is required as a cofactor.

It is found in the cytoplasm. The catalysed reaction is 2 D-alanine + ATP = D-alanyl-D-alanine + ADP + phosphate + H(+). The protein operates within cell wall biogenesis; peptidoglycan biosynthesis. Its function is as follows. Cell wall formation. The polypeptide is D-alanine--D-alanine ligase (Xanthomonas axonopodis pv. citri (strain 306)).